A 194-amino-acid polypeptide reads, in one-letter code: Large ribosomal subunit protein bL27c (194 aa).

Residues 1–57 constitute a chloroplast transit peptide; sequence MAVTTSMSFNLMASFRGMSLSSSSSSSFFKGEFGPSSLRLPNKSPLSVSPFPLTIES. Residues 57–76 are disordered; sequence SAHKKGAGSTKNGRDSKGQR.

Component of the chloroplast large ribosomal subunit (LSU). Mature 70S chloroplast ribosomes of higher plants consist of a small (30S) and a large (50S) subunit. The 30S small subunit contains 1 molecule of ribosomal RNA (16S rRNA) and 24 different proteins. The 50S large subunit contains 3 rRNA molecules (23S, 5S and 4.5S rRNA) and 33 different proteins.

It localises to the plastid. The protein localises to the chloroplast. Its function is as follows. Component of the chloroplast ribosome (chloro-ribosome), a dedicated translation machinery responsible for the synthesis of chloroplast genome-encoded proteins, including proteins of the transcription and translation machinery and components of the photosynthetic apparatus. This chain is Large ribosomal subunit protein bL27c (RPL27), found in Spinacia oleracea (Spinach).